Here is a 397-residue protein sequence, read N- to C-terminus: Acetate kinase (397 aa).

A Mg(2+)-binding site is contributed by Asn-7. Lys-14 contacts ATP. A substrate-binding site is contributed by Arg-90. Asp-147 serves as the catalytic Proton donor/acceptor. Residues 207–211, 282–284, and 330–334 contribute to the ATP site; these read HLGNG, DFR, and GLGEN. Residue Glu-383 participates in Mg(2+) binding.

The protein belongs to the acetokinase family. Homodimer. The cofactor is Mg(2+). It depends on Mn(2+) as a cofactor.

Its subcellular location is the cytoplasm. It carries out the reaction acetate + ATP = acetyl phosphate + ADP. The protein operates within metabolic intermediate biosynthesis; acetyl-CoA biosynthesis; acetyl-CoA from acetate: step 1/2. Functionally, catalyzes the formation of acetyl phosphate from acetate and ATP. Can also catalyze the reverse reaction. The protein is Acetate kinase of Clostridium botulinum (strain 657 / Type Ba4).